The primary structure comprises 329 residues: Short-chain dehydrogenase/reductase tropG (329 aa).

Lys-57, Asp-86, Asn-113, Tyr-203, and Lys-207 together coordinate NADP(+). The active-site Proton acceptor is Tyr-203. The active-site Lowers pKa of active site Tyr is Lys-207.

The protein belongs to the short-chain dehydrogenases/reductases (SDR) family.

It functions in the pathway secondary metabolite biosynthesis. Its function is as follows. Short-chain dehydrogenase/reductase; part of the gene cluster that mediates the biosynthesis of the tropolone class of fungal maleic anhydrides. The pathway begins with the synthesis of 3-methylorcinaldehyde by the non-reducing polyketide synthase (PKS) tropA. 3-methylorcinaldehyde is the substrate for the FAD-dependent monooxygenase tropB to yield a dearomatized hydroxycyclohexadione. The 2-oxoglutarate-dependent dioxygenase tropC then performs the oxidative ring expansion to provide the first tropolone metabolite stipitaldehyde. Trop D converts stipitaldehyde into stipitacetal which is in turn converted to stipitalide by the short-chain dehydrogenase/reductase tropE. The next steps involve tropF, tropG, tropH, tropI and tropJ to form successive tropolone maleic anhydrides including stipitaldehydic, stipitatonic and stipitatic acids. The sequence is that of Short-chain dehydrogenase/reductase tropG from Talaromyces stipitatus (strain ATCC 10500 / CBS 375.48 / QM 6759 / NRRL 1006) (Penicillium stipitatum).